The chain runs to 263 residues: Interleukin-22 receptor subunit alpha-2 (263 aa).

Residues 1 to 21 form the signal peptide; it reads MMPKHCFLGFLISFFLTGVAG. Fibronectin type-III domains lie at 26-68, 100-161, and 162-263; these read HESL…KIMF, GQRQ…TKID, and PPVM…VEIP. Residue N56 is glycosylated (N-linked (GlcNAc...) asparagine). A disulfide bridge links C110 with C118. N-linked (GlcNAc...) asparagine glycans are attached at residues N166, N171, N192, and N209. A disulfide bond links C238 and C259.

Belongs to the type II cytokine receptor family. As to expression, expressed in placenta, spleen, breast, skin and lung. Also detected in intestinal tract, testis, brain, heart and thymus. No expression found in prostate, bladder, kidney, ovary, muscle, bone marrow, liver and uterus. Isoform 1 is expressed only in placenta. Isoform 2 is expressed in placenta and breast and at lower level in spleen, skin, thymus and stomach.

The protein resides in the secreted. In terms of biological role, isoform 2 is a receptor for IL22. Binds to IL22, prevents interaction with the functional IL-22R complex and blocks the activity of IL22 (in vitro). May play an important role as an IL22 antagonist in the regulation of inflammatory responses. Isoform 1 may play a role in establishing and maintaining successful pregnancy. This Homo sapiens (Human) protein is Interleukin-22 receptor subunit alpha-2 (IL22RA2).